The sequence spans 597 residues: Dictomallein-3 (597 aa).

Positions 1 to 19 are cleaved as a signal peptide; sequence MKLILILIFLFSCILFINC. Residues 148–409 form the Peptidase M66 domain; that stretch reads PDVGQDYTLK…QNYFKNSIYY (262 aa). H301 contributes to the Zn(2+) binding site. Residue E302 is part of the active site. Positions 305 and 311 each coordinate Zn(2+).

Belongs to the dictomallein family. Zn(2+) serves as cofactor.

The protein resides in the secreted. The protein is Dictomallein-3 (dtmlC) of Dictyostelium discoideum (Social amoeba).